A 222-amino-acid polypeptide reads, in one-letter code: Pro-opiomelanocortin-1 (222 aa).

Positions M1–A28 are cleaved as a signal peptide. The propeptide occupies Q29–H105.

The protein belongs to the POMC family. Post-translationally, specific enzymatic cleavages at paired basic residues yield the different active peptides.

It localises to the secreted. Its function is as follows. Stimulates the adrenal glands to release cortisol. In terms of biological role, anorexigenic peptide. Increases the pigmentation of skin by increasing melanin production in melanocytes. Increases the pigmentation of skin by increasing melanin production in melanocytes. Functionally, endogenous orexigenic opiate. Its function is as follows. Endogenous opiate. This Cyprinus carpio (Common carp) protein is Pro-opiomelanocortin-1 (pomca).